Consider the following 266-residue polypeptide: Energy-coupling factor transporter ATP-binding protein EcfA2 (266 aa).

The 236-residue stretch at 3–238 (IEVVNVSHIF…YDPRFFTSKM (236 aa)) folds into the ABC transporter domain. Residue 43–48 (GSGKST) participates in ATP binding. Glutamate 164 acts as the Proton acceptor in catalysis. A required for heterodimer formation region spans residues 220–266 (GTRMEFLEKYDPRFFTSKMLVMRRLVLKGEDPFSMSDDELLERVCNS).

The protein belongs to the ABC transporter superfamily. Energy-coupling factor EcfA family. As to quaternary structure, forms a heterodimer with EcfA1. Forms a stable energy-coupling factor (ECF) transporter complex composed of 2 membrane-embedded substrate-binding proteins (S component, RibU, BioY), 2 ATP-binding proteins (A component) and 2 transmembrane proteins (T component) upon coexpression in E.coli. Stable subcomplexes with both A plus T components can also be isolated. This complex interacts with at least 2 substrate-specific components, BioY and RibU.

It is found in the cell inner membrane. ATP-binding (A) component of a common energy-coupling factor (ECF) ABC-transporter complex. Unlike classic ABC transporters this ECF transporter provides the energy necessary to transport a number of different substrates. Expression of the complex plus RibU in E.coli allows riboflavin uptake; uptake does not occur in the absence of RibU or the EcfA1A2T complex. The polypeptide is Energy-coupling factor transporter ATP-binding protein EcfA2 (ecfA2) (Thermotoga maritima (strain ATCC 43589 / DSM 3109 / JCM 10099 / NBRC 100826 / MSB8)).